The primary structure comprises 457 residues: Carboxypeptidase N catalytic chain (457 aa).

Residues Met-1 to Phe-23 form the signal peptide. Residues Arg-24 to Val-338 form the Peptidase M14 domain. Cys-42 and Cys-104 are joined by a disulfide. His-86, Glu-89, and His-216 together coordinate Zn(2+). Cys-271 and Cys-311 form a disulfide bridge. The Proton donor/acceptor role is filled by Glu-308. O-linked (GalNAc...) threonine glycans are attached at residues Thr-400, Thr-402, and Thr-409. The segment at Ser-418 to Ala-457 is disordered.

The protein belongs to the peptidase M14 family. As to quaternary structure, tetramer of two catalytic chains and two glycosylated inactive chains. It depends on Zn(2+) as a cofactor. Plasma. Expressed in liver.

The protein resides in the secreted. Its subcellular location is the extracellular space. The enzyme catalyses Release of a C-terminal basic amino acid, preferentially lysine.. Its function is as follows. Protects the body from potent vasoactive and inflammatory peptides containing C-terminal Arg or Lys (such as kinins or anaphylatoxins) which are released into the circulation. The protein is Carboxypeptidase N catalytic chain (Cpn1) of Rattus norvegicus (Rat).